An 84-amino-acid chain; its full sequence is U4-theraphotoxin-Hhn1aa (84 aa).

The N-terminal stretch at 1–22 (MKVTLIAILTCAAVLVLHTTAA) is a signal peptide. The propeptide occupies 23 to 47 (EELEESQLMEVGMPDTELAAVDEER). 2 cysteine pairs are disulfide-bonded: Cys-51–Cys-65 and Cys-55–Cys-76.

This sequence belongs to the neurotoxin 12 (Hwtx-2) family. 02 (Hwtx-2) subfamily. Expressed by the venom gland.

The protein localises to the secreted. Its function is as follows. Postsynaptic neurotoxin. The sequence is that of U4-theraphotoxin-Hhn1aa from Cyriopagopus hainanus (Chinese bird spider).